The primary structure comprises 98 residues: NADH-ubiquinone oxidoreductase chain 4L (98 aa).

3 consecutive transmembrane segments (helical) span residues 1-21 (MSMV…GLLV), 30-50 (LLCL…TILI), and 61-81 (IILL…LVMV).

The protein belongs to the complex I subunit 4L family. In terms of assembly, core subunit of respiratory chain NADH dehydrogenase (Complex I) which is composed of 45 different subunits.

The protein localises to the mitochondrion inner membrane. It catalyses the reaction a ubiquinone + NADH + 5 H(+)(in) = a ubiquinol + NAD(+) + 4 H(+)(out). In terms of biological role, core subunit of the mitochondrial membrane respiratory chain NADH dehydrogenase (Complex I) which catalyzes electron transfer from NADH through the respiratory chain, using ubiquinone as an electron acceptor. Part of the enzyme membrane arm which is embedded in the lipid bilayer and involved in proton translocation. The protein is NADH-ubiquinone oxidoreductase chain 4L (MT-ND4L) of Pagophilus groenlandicus (Harp seal).